A 459-amino-acid chain; its full sequence is uncharacterized protein (459 aa).

The region spanning 6-64 (KNKQEKNIIITIKRLGINGEGIGYYKKKIIFIPGALPNEVVVAKIVDRHPHYLEGELVR) is the TRAM domain. The S-adenosyl-L-methionine site is built by Q289, Y318, E339, and D387. C414 serves as the catalytic Nucleophile.

Belongs to the class I-like SAM-binding methyltransferase superfamily. RNA M5U methyltransferase family.

This is an uncharacterized protein from Lactobacillus johnsonii (strain CNCM I-12250 / La1 / NCC 533).